The chain runs to 194 residues: Imidazoleglycerol-phosphate dehydratase (194 aa).

The protein belongs to the imidazoleglycerol-phosphate dehydratase family.

It is found in the cytoplasm. It carries out the reaction D-erythro-1-(imidazol-4-yl)glycerol 3-phosphate = 3-(imidazol-4-yl)-2-oxopropyl phosphate + H2O. It participates in amino-acid biosynthesis; L-histidine biosynthesis; L-histidine from 5-phospho-alpha-D-ribose 1-diphosphate: step 6/9. In Thermoanaerobacter sp. (strain X514), this protein is Imidazoleglycerol-phosphate dehydratase.